The sequence spans 215 residues: Negative modulator of initiation of replication (215 aa).

Residues 71 to 93 form a disordered region; that stretch reads AETPKPSSEQEIRTPARKQSTQS. An interaction with DNA region spans residues 181 to 187; it reads NTNSGRK.

It belongs to the SeqA family. As to quaternary structure, homodimer. Polymerizes to form helical filaments.

The protein resides in the cytoplasm. Functionally, negative regulator of replication initiation, which contributes to regulation of DNA replication and ensures that replication initiation occurs exactly once per chromosome per cell cycle. Binds to pairs of hemimethylated GATC sequences in the oriC region, thus preventing assembly of replication proteins and re-initiation at newly replicated origins. Repression is relieved when the region becomes fully methylated. The sequence is that of Negative modulator of initiation of replication from Mannheimia succiniciproducens (strain KCTC 0769BP / MBEL55E).